Consider the following 279-residue polypeptide: Coiled-coil domain-containing protein 117 (279 aa).

Residues Met-1 to Pro-82 are disordered. Arg-48 carries the post-translational modification Omega-N-methylarginine. Ser-53 is subject to Phosphoserine. Over residues Val-63–Lys-72 the composition is skewed to basic residues. Residues Gln-141–Asn-168 are a coiled coil. Positions Leu-217–Leu-279 are disordered. Polar residues-rich tracts occupy residues Pro-224 to Ser-235 and Ser-262 to Ser-272.

As to quaternary structure, interacts with CIAO2B; the interaction is direct. Interacts with MMS19; the interaction is indirect.

It is found in the cytoplasm. The protein resides in the cytoskeleton. Its subcellular location is the spindle. It localises to the nucleus. In terms of biological role, facilitates DNA repair, cell cycle progression, and cell proliferation through its interaction with CIAO2B. The polypeptide is Coiled-coil domain-containing protein 117 (Homo sapiens (Human)).